We begin with the raw amino-acid sequence, 544 residues long: MVAEVCSMPAASAVKKPFDLRSKMGKWCHHRFPCCRGSGTSNVGTSGDHDDSFMKTLRSKMGKWCCHCFPCCRGSGKSNVGTWGDYDDSAFMEPRYHVRREDLDKLHRAAWWGKVPRKDLIVMLRDTDMNKRDKQKRTALHLASANGNSEVVQLLLDRRCQLNVLDNKKRTALIKAVQCQEDECVLMLLEHGADGNIQDEYGNTALHYAIYNEDKLMAKALLLYGADIESKNKCGLTPLLLGVHEQKQEVVKFLIKKKANLNALDRYGRTALILAVCCGSASIVNLLLEQNVDVSSQDLSGQTAREYAVSSHHHVICELLSDYKEKQMLKISSENSNPEQDLKLTSEEESQRLKVSENSQPEKMSQEPEINKDCDREVEEEIKKHGSNPVGLPENLTNGASAGNGDDGLIPQRKSRKPENQQFPDTENEEYHSDEQNDTQKQLSEEQNTGISQDEILTNKQKQIEVAEKEMNSELSLSHKKEEDLLRENSMLREEIAKLRLELDETKHQNQLRENKILEEIESVKEKLLKTIQLNEEALTKTSI.

ANK repeat units follow at residues Q135–N167, K168–E200, Y201–K233, C234–R266, and Y267–L299. The disordered stretch occupies residues S332–L457. 2 stretches are compositionally biased toward basic and acidic residues: residues Q340–V355 and M364–D375. Residues T439 to L457 are compositionally biased toward polar residues.

This sequence belongs to the POTE family.

The chain is POTE ankyrin domain family member B2 (POTEB2) from Homo sapiens (Human).